A 192-amino-acid chain; its full sequence is Putative B3 domain-containing protein At4g03160 (192 aa).

The disordered stretch occupies residues 22–44 (VFFDQEEEEEDEEEEYDEESVCE). A compositionally biased stretch (acidic residues) spans 25–44 (DQEEEEEDEEEEYDEESVCE). The TF-B3 DNA-binding region spans 75 to 173 (KDNQYRLMLG…EICFAIDSTR (99 aa)).

It is found in the nucleus. This chain is Putative B3 domain-containing protein At4g03160, found in Arabidopsis thaliana (Mouse-ear cress).